The following is a 346-amino-acid chain: Cytochrome c551 peroxidase (346 aa).

An N-terminal signal peptide occupies residues 1 to 23 (MQSSQLLPLGSLLLSFATPLAQA). Heme c is bound by residues Cys74, Cys77, His78, Cys220, Cys223, His224, His284, and Met298.

Requires heme c as cofactor. In terms of processing, binds 2 heme groups per subunit. Sequencing of the whole protein indicates about 20% starts on Val-247.

Its subcellular location is the periplasm. The catalysed reaction is 2 Fe(II)-[cytochrome c] + H2O2 + 2 H(+) = 2 Fe(III)-[cytochrome c] + 2 H2O. Its function is as follows. Catalyzes the peroxidative oxidation of azurin and cytochrome c551. Likely to provide protection against toxic peroxides. The sequence is that of Cytochrome c551 peroxidase (ccpA) from Pseudomonas aeruginosa (strain ATCC 15692 / DSM 22644 / CIP 104116 / JCM 14847 / LMG 12228 / 1C / PRS 101 / PAO1).